Consider the following 435-residue polypeptide: Asparagine--tRNA ligase (435 aa).

It belongs to the class-II aminoacyl-tRNA synthetase family. In terms of assembly, homodimer.

It is found in the cytoplasm. The enzyme catalyses tRNA(Asn) + L-asparagine + ATP = L-asparaginyl-tRNA(Asn) + AMP + diphosphate + H(+). This chain is Asparagine--tRNA ligase, found in Leptospira interrogans serogroup Icterohaemorrhagiae serovar Lai (strain 56601).